A 379-amino-acid polypeptide reads, in one-letter code: MSELSFDAPVWRHGKALRKGYTTGSCATAAAKVAALMVLRQHLIHQVSIVTPSGVTLCLNVESPHIEGQQAIAAIRKDGGDDVDATHGMLIFARVTLNDSGEITLTGGEGIGTVTRKGVGLPLGSAAINRTPRHTIESAVREAIGPARGADVEIFAPEGEVRAQKTYNSRLGILGGISIIGTTGIVTPMSEESWKRSLSLELEIKRASGLTRVILVPGNHGERFVREQMGVDTQAVVTMSNFVGYMIEEAVRLGFCQIVLVGHPGKLIKIAAGIFHTHSHIADARMETLVAHLALLGAPLELLTLVGDCDTTEAAMEHIEAYGFGHIYNHLARRICLRVMQMRRFTKTPPVCDAILFSFDNHILGSNRPVDEIAKELQC.

It belongs to the CbiD family.

The enzyme catalyses Co-precorrin-5B + S-adenosyl-L-methionine = Co-precorrin-6A + S-adenosyl-L-homocysteine. The protein operates within cofactor biosynthesis; adenosylcobalamin biosynthesis; cob(II)yrinate a,c-diamide from sirohydrochlorin (anaerobic route): step 6/10. Its function is as follows. Catalyzes the methylation of C-1 in cobalt-precorrin-5B to form cobalt-precorrin-6A. The sequence is that of Cobalt-precorrin-5B C(1)-methyltransferase from Salmonella paratyphi A (strain ATCC 9150 / SARB42).